A 159-amino-acid polypeptide reads, in one-letter code: Phosphopantetheine adenylyltransferase (159 aa).

A substrate-binding site is contributed by threonine 9. ATP is bound by residues 9–10 (TF) and histidine 17. 3 residues coordinate substrate: lysine 41, leucine 73, and arginine 87. ATP is bound by residues 88 to 90 (GLR), glutamate 98, and 123 to 129 (YMFISAT).

This sequence belongs to the bacterial CoaD family. Homohexamer. Mg(2+) serves as cofactor.

It localises to the cytoplasm. It carries out the reaction (R)-4'-phosphopantetheine + ATP + H(+) = 3'-dephospho-CoA + diphosphate. It participates in cofactor biosynthesis; coenzyme A biosynthesis; CoA from (R)-pantothenate: step 4/5. Functionally, reversibly transfers an adenylyl group from ATP to 4'-phosphopantetheine, yielding dephospho-CoA (dPCoA) and pyrophosphate. This Nitrosomonas europaea (strain ATCC 19718 / CIP 103999 / KCTC 2705 / NBRC 14298) protein is Phosphopantetheine adenylyltransferase.